The sequence spans 181 residues: MSRIKKARKPGMSSQPVVVTRNRTDRDVESREIKRKRKRKGLKAGARNAESNAEQARRNAQKKDPRIGSKKPIQLVVEAKQKTTKQERRLTNEQELAMLENDAQLMVLLDRLDSGENLGTGLQKYVDEKLARIEHLMGRLGLLDDEEPEEIEEFPEFAERKAKSDDDLLAEFDDFNMDDFK.

The tract at residues 1-73 (MSRIKKARKP…DPRIGSKKPI (73 aa)) is disordered. The span at 22–32 (NRTDRDVESRE) shows a compositional bias: basic and acidic residues. Basic residues predominate over residues 33–42 (IKRKRKRKGL). Positions 55–67 (QARRNAQKKDPRI) are enriched in basic and acidic residues.

It belongs to the YihI family. As to quaternary structure, interacts with Der.

In terms of biological role, a GTPase-activating protein (GAP) that modifies Der/EngA GTPase function. May play a role in ribosome biogenesis. The protein is Der GTPase-activating protein YihI of Aliivibrio fischeri (strain ATCC 700601 / ES114) (Vibrio fischeri).